The primary structure comprises 718 residues: Phenylalanine--tRNA ligase beta subunit (718 aa).

Residues 39-153 (LNEISGIKFG…IFDLESNPLK (115 aa)) form the tRNA-binding domain. The B5 domain occupies 386–460 (SKKTFLDLNY…RFYGLEKLKD (75 aa)). Positions 438, 444, and 448 each coordinate Mg(2+).

This sequence belongs to the phenylalanyl-tRNA synthetase beta subunit family. Type 1 subfamily. In terms of assembly, tetramer of two alpha and two beta subunits. Requires Mg(2+) as cofactor.

The protein resides in the cytoplasm. It carries out the reaction tRNA(Phe) + L-phenylalanine + ATP = L-phenylalanyl-tRNA(Phe) + AMP + diphosphate + H(+). The chain is Phenylalanine--tRNA ligase beta subunit from Mesomycoplasma hyopneumoniae (strain 7448) (Mycoplasma hyopneumoniae).